The sequence spans 119 residues: Large ribosomal subunit protein uL22c (119 aa).

It belongs to the universal ribosomal protein uL22 family. Part of the 50S ribosomal subunit.

The protein resides in the plastid. The protein localises to the chloroplast. This protein binds specifically to 23S rRNA. In terms of biological role, the globular domain of the protein is located near the polypeptide exit tunnel on the outside of the subunit, while an extended beta-hairpin is found that lines the wall of the exit tunnel in the center of the 70S ribosome. In Marchantia polymorpha (Common liverwort), this protein is Large ribosomal subunit protein uL22c (rpl22).